The sequence spans 336 residues: Atypical chemokine receptor 1 (336 aa).

Topologically, residues 1–63 are extracellular; that stretch reads MGNCLHQAEL…CNLLDDSSLP (63 aa). Residues N16, N27, and N33 are each glycosylated (N-linked (GlcNAc...) asparagine). Cystine bridges form between C51–C276 and C129–C195. A helical membrane pass occupies residues 64 to 84; sequence FFILASVLGILASSTVLFLLF. At 85 to 95 the chain is on the cytoplasmic side; it reads RPLFRWQLCPG. Residues 96–116 traverse the membrane as a helical segment; the sequence is WPVLAQLAVGSTLFSIVVPIL. At 117-129 the chain is on the extracellular side; it reads APGLGNTRSSAPC. Residues 130 to 153 traverse the membrane as a helical segment; sequence SLGYCVWYGSAFAQALLLGCHASL. Over 154–166 the chain is Cytoplasmic; that stretch reads GPKLGAGQVPGLT. The chain crosses the membrane as a helical span at residues 167–187; the sequence is LGLSVGLWGAAALLTLPITLA. Residues 188–207 are Extracellular-facing; it reads SDASDGLCTPIYSTELKALQ. A helical membrane pass occupies residues 208–228; sequence ATHTVACFAIFVLLPLGLFGA. Topologically, residues 229 to 244 are cytoplasmic; that stretch reads KGLKKVLGMGPGPWMN. A helical membrane pass occupies residues 245-265; it reads ILWVWFIFWWPHGVVLGLDFL. Topologically, residues 266 to 287 are extracellular; the sequence is VRSKLLLLPTCLAQQVLDLLLN. Residues 288–308 traverse the membrane as a helical segment; that stretch reads LAEALAIVHCVATPLLLALFC. Over 309–336 the chain is Cytoplasmic; that stretch reads HQATRTLVPSLPLPERWSSPVDTLGSKS.

Belongs to the G-protein coupled receptor 1 family. Atypical chemokine receptor subfamily.

It localises to the early endosome. Its subcellular location is the recycling endosome. The protein localises to the membrane. Its function is as follows. Atypical chemokine receptor that controls chemokine levels and localization via high-affinity chemokine binding that is uncoupled from classic ligand-driven signal transduction cascades, resulting instead in chemokine sequestration, degradation, or transcytosis. Also known as interceptor (internalizing receptor) or chemokine-scavenging receptor or chemokine decoy receptor. Has a promiscuous chemokine-binding profile, interacting with inflammatory chemokines of both the CXC and the CC subfamilies but not with homeostatic chemokines. Acts as a receptor for chemokines including CCL2, CCL5, CCL7, CCL11, CCL13, CCL14, CCL17, CXCL5, CXCL6, IL8/CXCL8, CXCL11, GRO, RANTES, MCP-1 and TARC. May regulate chemokine bioavailability and, consequently, leukocyte recruitment through two distinct mechanisms: when expressed in endothelial cells, it sustains the abluminal to luminal transcytosis of tissue-derived chemokines and their subsequent presentation to circulating leukocytes; when expressed in erythrocytes, serves as blood reservoir of cognate chemokines but also as a chemokine sink, buffering potential surges in plasma chemokine levels. The chain is Atypical chemokine receptor 1 (ACKR1) from Saguinus imperator (Emperor tamarin).